The sequence spans 83 residues: MSSGGLLLLVGLLTLCAELTPVSSKDRPKFCNVPPEPGRCNANVRAFYYNPRLRKCIEFTYGGCGGNANNFKSGGECKRACGE.

Positions 1 to 24 (MSSGGLLLLVGLLTLCAELTPVSS) are cleaved as a signal peptide. The BPTI/Kunitz inhibitor domain occupies 31–81 (CNVPPEPGRCNANVRAFYYNPRLRKCIEFTYGGCGGNANNFKSGGECKRAC). 3 disulfide bridges follow: cysteine 31–cysteine 81, cysteine 40–cysteine 64, and cysteine 56–cysteine 77.

The protein belongs to the venom Kunitz-type family. As to expression, expressed by the venom gland.

Its subcellular location is the secreted. In terms of biological role, serine protease inhibitor. This Bungarus candidus (Malayan krait) protein is Kunitz-type serine protease inhibitor B.